A 354-amino-acid chain; its full sequence is Protein Wnt-11 (354 aa).

The N-terminal stretch at 1 to 24 (MKPSPQFLLAAFLSLILQTGICYG) is a signal peptide. N-linked (GlcNAc...) asparagine glycans are attached at residues N40 and N90. Cystine bridges form between C80/C91, C130/C138, C140/C157, C209/C223, C211/C218, C283/C314, C299/C309, C313/C353, C329/C344, C331/C341, and C336/C337. S215 carries the O-palmitoleoyl serine; by PORCN lipid modification. N-linked (GlcNAc...) asparagine glycosylation is found at N300 and N304.

The protein belongs to the Wnt family. In terms of processing, palmitoleoylation is required for efficient binding to frizzled receptors. Depalmitoleoylation leads to Wnt signaling pathway inhibition.

The protein localises to the secreted. It is found in the extracellular space. The protein resides in the extracellular matrix. Functionally, ligand for members of the frizzled family of seven transmembrane receptors. May play a role in the formation of dermal structure, both limb and feather buds. Is likely to signal over only few cell diameters. This is Protein Wnt-11 (WNT11) from Coturnix japonica (Japanese quail).